Here is a 121-residue protein sequence, read N- to C-terminus: Cytochrome c2 iso-2 (121 aa).

Heme c is bound by residues C15, C18, H19, and M98.

The protein belongs to the cytochrome c family. Post-translationally, binds 1 heme c group covalently per subunit.

Its function is as follows. Cytochrome c2 is found mainly in purple, non-sulfur, photosynthetic bacteria where it functions as the electron donor to the oxidized bacteriochlorophyll in the photophosphorylation pathway. However, it may also have a role in the respiratory chain and is found in some non-photosynthetic bacteria. This is Cytochrome c2 iso-2 from Rhodospirillum centenum (Rhodocista centenaria).